The following is a 357-amino-acid chain: Membrane-bound lytic murein transglycosylase C (357 aa).

The first 16 residues, 1-16 (MKKMLALLVIAPLLVS), serve as a signal peptide directing secretion. C17 carries N-palmitoyl cysteine lipidation. The S-diacylglycerol cysteine moiety is linked to residue C17.

The protein belongs to the transglycosylase Slt family.

The protein localises to the cell outer membrane. It carries out the reaction Exolytic cleavage of the (1-&gt;4)-beta-glycosidic linkage between N-acetylmuramic acid (MurNAc) and N-acetylglucosamine (GlcNAc) residues in peptidoglycan, from either the reducing or the non-reducing ends of the peptidoglycan chains, with concomitant formation of a 1,6-anhydrobond in the MurNAc residue.. Its function is as follows. Murein-degrading enzyme. May play a role in recycling of muropeptides during cell elongation and/or cell division. The polypeptide is Membrane-bound lytic murein transglycosylase C (Pectobacterium atrosepticum (strain SCRI 1043 / ATCC BAA-672) (Erwinia carotovora subsp. atroseptica)).